The following is a 316-amino-acid chain: Transaldolase (316 aa).

Lys-132 acts as the Schiff-base intermediate with substrate in catalysis.

The protein belongs to the transaldolase family. Type 1 subfamily. As to quaternary structure, homodimer.

The protein resides in the cytoplasm. The catalysed reaction is D-sedoheptulose 7-phosphate + D-glyceraldehyde 3-phosphate = D-erythrose 4-phosphate + beta-D-fructose 6-phosphate. Its pathway is carbohydrate degradation; pentose phosphate pathway; D-glyceraldehyde 3-phosphate and beta-D-fructose 6-phosphate from D-ribose 5-phosphate and D-xylulose 5-phosphate (non-oxidative stage): step 2/3. Its function is as follows. Transaldolase is important for the balance of metabolites in the pentose-phosphate pathway. In Aliivibrio fischeri (strain MJ11) (Vibrio fischeri), this protein is Transaldolase.